Consider the following 147-residue polypeptide: uncharacterized protein (147 aa).

The Rhodanese domain maps to 50 to 140 (NQKKAIIVDT…WNSENLPTTF (91 aa)).

This is an uncharacterized protein from Buchnera aphidicola subsp. Schizaphis graminum (strain Sg).